The primary structure comprises 710 residues: Solute carrier organic anion transporter family member 3A1 (710 aa).

Residue Met-1 is modified to N-acetylmethionine. Over residues 1 to 15 (MQGKKPGGSSGGGRS) the composition is skewed to gly residues. The tract at residues 1 to 25 (MQGKKPGGSSGGGRSGELQGDEAQR) is disordered. Topologically, residues 1–40 (MQGKKPGGSSGGGRSGELQGDEAQRNKKKKKKVSCFSNIK) are cytoplasmic. A helical membrane pass occupies residues 41–60 (IFLVSECALMLAQGTVGAYL). The Extracellular portion of the chain corresponds to 61–79 (VSVLTTLERRFNLQSADVG). Residues 80 to 100 (VIASSFEIGNLALILFVSYFG) form a helical membrane-spanning segment. The Cytoplasmic portion of the chain corresponds to 101 to 106 (ARGHRP). A helical transmembrane segment spans residues 107–131 (RLIGCGGIVMALGALLSALPEFLTH). Over 132–174 (QYKYEAGEIRWGAEGRDVCAANGSGGDEGPDPDLICRNRTATN) the chain is Extracellular. Asn-153 and Asn-169 each carry an N-linked (GlcNAc...) asparagine glycan. Residues 175-203 (MMYLLLIGAQVLLGIGATPVQPLGVSYID) traverse the membrane as a helical segment. Over 204-222 (DHVRRKDSSLYIGILFTML) the chain is Cytoplasmic. A helical transmembrane segment spans residues 223 to 243 (VFGPACGFILGSFCTKIYVDA). Over 244–261 (VFIDTSNLDITPDDPRWI) the chain is Extracellular. The helical transmembrane segment at 262–286 (GAWWGGFLLCGALLFFSSLLMFGFP) threads the bilayer. Over 287–344 (QSLPPHSEPAMESEQAMLSEREYERPKPSNGVLRHPLEPDSSASCFQQLRVIPKVTKH) the chain is Cytoplasmic. The chain crosses the membrane as a helical span at residues 345 to 366 (LLSNPVFTCIILAACMEIAVVA). Residues 367–386 (GFAAFLGKYLEQQFNLTTSS) are Extracellular-facing. N-linked (GlcNAc...) asparagine glycosylation occurs at Asn-381. The helical transmembrane segment at 387-410 (ANQLLGMTAIPCACLGIFLGGLLV) threads the bilayer. The Cytoplasmic portion of the chain corresponds to 411 to 414 (KKLS). The chain crosses the membrane as a helical span at residues 415-438 (LSALGAIRMAMLVNLVSTACYVSF). At 439-539 (LFLGCDTGPV…PGCQEAFLTF (101 aa)) the chain is on the extracellular side. Asn-457 carries N-linked (GlcNAc...) asparagine glycosylation. The Kazal-like domain maps to 465–513 (LDPYSPCNNNCECQTDSFTPVCGADGITYLSACFAGCNSTNLTGCACLT). 3 disulfides stabilise this stretch: Cys-471/Cys-501, Cys-477/Cys-497, and Cys-486/Cys-511. N-linked (GlcNAc...) asparagine glycosylation is found at Asn-502, Asn-505, and Asn-519. The chain crosses the membrane as a helical span at residues 540 to 562 (LCVMCICSLIGAMAQTPSVIILI). Topologically, residues 563-571 (RTVSPELKS) are cytoplasmic. Residues 572 to 597 (YALGVLFLLLRLLGFIPPPLIFGAGI) traverse the membrane as a helical segment. At 598–630 (DSTCLFWSTFCGEQGACVLYDNVVYRYLYVSIA) the chain is on the extracellular side. A helical transmembrane segment spans residues 631–648 (IALKSFAFILYTTTWQCL). At 649-705 (RKNYKRYIKNHEGGLSTSEFFASTLTLDNLGRDPVPANQTHRTKFIYNLEDHEWCEN) the chain is on the cytoplasmic side.

It belongs to the organo anion transporter (TC 2.A.60) family. As to expression, generally the expression of isoform 1 is higher than that of isoform 2. Expressed in placental trophoblasts. Expressed in pancreas, kidney, liver, lung, brain, heart, cerebellum, peripheral blood leukocyte, colon, small intestine, ovary, testis, prostate, thyroid, thymus and spleen. Expressed in fetal brain, heart, kidney, liver, lung, skeletal muscle, spleen and pancreas. In testis, detected in spermatogonia at different stages and absent from Sertoli cells. Expressed in the choroid plexus epithelium, at the basolateral membrane. In brain, also very abundant in the gray matter of the frontal cortex, but not associated with neuronal cell bodies. Not detected in the white matter. In terms of tissue distribution, expressed in heart, brain, cerebellum, testis, lung, thyroid, spoleen and liver. In testis, primarily localized to the basal membrane of Sertoli cells and weakly expressed within the tubules. In testis, also present in spermatogonia at different stages. In brain, expressed in the choroid plexus epithelium, at the apical membrane as well as in the subapical intracellular vesicular compartments. In brain, also associated with neuronal bodies and axons in both the gray and the white matters of the frontal cortex.

It is found in the basolateral cell membrane. Its subcellular location is the apical cell membrane. The protein resides in the basal cell membrane. It catalyses the reaction L-thyroxine(out) = L-thyroxine(in). The enzyme catalyses prostaglandin E1(out) = prostaglandin E1(in). It carries out the reaction prostaglandin E2(out) = prostaglandin E2(in). The catalysed reaction is prostaglandin F2alpha(out) = prostaglandin F2alpha(in). It catalyses the reaction (5Z,8Z,11Z,14Z)-eicosatetraenoate(out) = (5Z,8Z,11Z,14Z)-eicosatetraenoate(in). The enzyme catalyses taurocholate(out) = taurocholate(in). It carries out the reaction glycocholate(out) = glycocholate(in). The catalysed reaction is estrone 3-sulfate(out) = estrone 3-sulfate(in). It catalyses the reaction argipressin(out) = argipressin(in). Its activity is regulated as follows. Stimulated by extracellular acidic pH. In terms of biological role, putative organic anion antiporter with apparent broad substrate specificity. Recognizes various substrates including thyroid hormone L-thyroxine, prostanoids such as prostaglandin E1 and E2, bile acids such as taurocholate, glycolate and glycochenodeoxycholate and peptide hormones such as L-arginine vasopressin, likely operating in a tissue-specific manner. The transport mechanism, its electrogenicity and potential tissue-specific counterions remain to be elucidated. This Homo sapiens (Human) protein is Solute carrier organic anion transporter family member 3A1 (SLCO3A1).